A 355-amino-acid polypeptide reads, in one-letter code: 4-hydroxy-3-methylbut-2-en-1-yl diphosphate synthase (flavodoxin) (355 aa).

The [4Fe-4S] cluster site is built by Cys-266, Cys-269, Cys-301, and Glu-308.

The protein belongs to the IspG family. The cofactor is [4Fe-4S] cluster.

The enzyme catalyses (2E)-4-hydroxy-3-methylbut-2-enyl diphosphate + oxidized [flavodoxin] + H2O + 2 H(+) = 2-C-methyl-D-erythritol 2,4-cyclic diphosphate + reduced [flavodoxin]. Its pathway is isoprenoid biosynthesis; isopentenyl diphosphate biosynthesis via DXP pathway; isopentenyl diphosphate from 1-deoxy-D-xylulose 5-phosphate: step 5/6. Converts 2C-methyl-D-erythritol 2,4-cyclodiphosphate (ME-2,4cPP) into 1-hydroxy-2-methyl-2-(E)-butenyl 4-diphosphate. This Caldanaerobacter subterraneus subsp. tengcongensis (strain DSM 15242 / JCM 11007 / NBRC 100824 / MB4) (Thermoanaerobacter tengcongensis) protein is 4-hydroxy-3-methylbut-2-en-1-yl diphosphate synthase (flavodoxin).